Consider the following 148-residue polypeptide: Large ribosomal subunit protein uL15 (148 aa).

The disordered stretch occupies residues 1 to 51 (MNLSNLKPAEGSTKTRKRIGRGPGSGLGGTSTRGHKGAKSRSGYSKKIGFE). The span at 21 to 31 (RGPGSGLGGTS) shows a compositional bias: gly residues.

Belongs to the universal ribosomal protein uL15 family. In terms of assembly, part of the 50S ribosomal subunit.

Its function is as follows. Binds to the 23S rRNA. This Phocaeicola vulgatus (strain ATCC 8482 / DSM 1447 / JCM 5826 / CCUG 4940 / NBRC 14291 / NCTC 11154) (Bacteroides vulgatus) protein is Large ribosomal subunit protein uL15.